An 826-amino-acid chain; its full sequence is Periplasmic nitrate reductase (826 aa).

The segment at residues 1-32 (MELNRRDFMKANAAIAAAAAAGITIPVKNVQA) is a signal peptide (tat-type signal). A 4Fe-4S Mo/W bis-MGD-type domain is found at 37-93 (IRWDKAPCRYCGTGCSVLVGTKDGRVVATQGDPDAEVNRGLNCIKGYFLSKIMYGAD). Positions 44, 47, 51, and 79 each coordinate [4Fe-4S] cluster. Mo-bis(molybdopterin guanine dinucleotide) is bound by residues K81, Q148, N173, C177, 210–217 (WGSNMAEM), 241–245 (STYEH), 260–262 (QSD), M370, Q374, N480, 506–507 (SD), K529, D556, and 716–725 (TGRVLEHWHT). F792 lines the substrate pocket. Residues N800 and K817 each contribute to the Mo-bis(molybdopterin guanine dinucleotide) site.

The protein belongs to the prokaryotic molybdopterin-containing oxidoreductase family. NasA/NapA/NarB subfamily. As to quaternary structure, component of the periplasmic nitrate reductase NapAB complex composed of NapA and NapB. It depends on [4Fe-4S] cluster as a cofactor. Mo-bis(molybdopterin guanine dinucleotide) serves as cofactor. Post-translationally, predicted to be exported by the Tat system. The position of the signal peptide cleavage has not been experimentally proven.

Its subcellular location is the periplasm. It catalyses the reaction 2 Fe(II)-[cytochrome] + nitrate + 2 H(+) = 2 Fe(III)-[cytochrome] + nitrite + H2O. Its function is as follows. Catalytic subunit of the periplasmic nitrate reductase complex NapAB. Receives electrons from NapB and catalyzes the reduction of nitrate to nitrite. The polypeptide is Periplasmic nitrate reductase (Actinobacillus succinogenes (strain ATCC 55618 / DSM 22257 / CCUG 43843 / 130Z)).